Consider the following 339-residue polypeptide: Annexin A2 (339 aa).

Position 2 is an N-acetylserine (Ser-2). Residues 2 to 24 are S100A10-binding site; that stretch reads STVHEILCKLSLEGDHSTPPSAY. Tyr-24 carries the post-translational modification Phosphotyrosine; by SRC. A Phosphoserine; by PKC modification is found at Ser-26. 2 Annexin repeats span residues 33–104 and 105–176; these read FDAE…GLLK and TPAQ…ALAK. The residue at position 49 (Lys-49) is an N6-acetyllysine; alternate. Lys-49 is covalently cross-linked (Glycyl lysine isopeptide (Lys-Gly) (interchain with G-Cter in SUMO1); alternate). Lys-49 is covalently cross-linked (Glycyl lysine isopeptide (Lys-Gly) (interchain with G-Cter in SUMO2); alternate). Lys-152 carries the post-translational modification N6-acetyllysine. Ser-184 carries the post-translational modification Phosphoserine. Annexin repeat units follow at residues 189-261 and 265-336; these read ELID…NLVQ and NKPL…YLCG. Tyr-199 carries the post-translational modification Phosphotyrosine. Position 227 is an N6-acetyllysine (Lys-227).

Belongs to the annexin family. In terms of assembly, heterotetramer containing 2 light chains of S100A10/p11 and 2 heavy chains of ANXA2/p36. Interacts with ATP1B1. Interacts with DYSF. Interacts with COCH. Interacts (via repeat Annexin 1) with PCSK9 (via the C-terminal domain); the interaction inhibits the degradation of LDLR. Interacts with CEACAM1 (via the cytoplasmic domain); this interaction is regulated by phosphorylation of CEACAM1. Interacts with APPL2 and APPL1; targets APPL2 to endosomes and acting in parallel to RAB5A. Interacts with S100A4. May interact with UBAP2. Interacts with PLEKHG4B; this interaction is required for PLEKHG4B localization to cell-cell adhesions. Interacts with FAM13A. Interacts with salivary cystatin-L2 (via loop 2) from the tick Ixodes scapularis; the interaction results in reduced activation of mouse NLRC4 inflammasome formation upon Anaplasma phagocytophilum infection. Post-translationally, ISGylated.

Its subcellular location is the secreted. The protein resides in the extracellular space. The protein localises to the extracellular matrix. It localises to the basement membrane. It is found in the melanosome. Its subcellular location is the early endosome. Functionally, calcium-regulated membrane-binding protein whose affinity for calcium is greatly enhanced by anionic phospholipids. It binds two calcium ions with high affinity. May be involved in heat-stress response. Inhibits PCSK9-enhanced LDLR degradation, probably reduces PCSK9 protein levels via a translational mechanism but also competes with LDLR for binding with PCSK9. Binds to endosomes damaged by phagocytosis of particulate wear debris and participates in endosomal membrane stabilization, thereby limiting NLRP3 inflammasome activation. Required for endothelial cell surface plasmin generation and may support fibrinolytic surveillance and neoangiogenesis. (Microbial infection) Regulates the formation of the NLRC4 inflammasome triggered by Anaplasma phagocytophilum infection. Its function is as follows. (Microbial infection) Protects against Klebsiella pneumoniae infection. Attenuates bacteria-induced pulmonary inflammation and promotes intro-abdominal pathogen clearance. Promotes anti-inflammatory responses by facilitating TLR4 internalization and translocation into early endosomal membranes; this leads to activation of TRAM-dependent endosomal signaling and release of anti-inflammatory cytokines. In terms of biological role, (Microbial infection) Promotes macrophage phagocytic efficiency towards Cryptococcus neoformans and ability to control fungal infection inside the cells. Functionally, (Microbial infection) Contributes to protection against Pseudomonas aeruginosa infection by regulating autophagy via the AKT1-mTOR-ULK1/2 signaling pathway and activation of Rho GTPases via FAM13A-mediated mechanism. The sequence is that of Annexin A2 (Anxa2) from Mus musculus (Mouse).